A 252-amino-acid chain; its full sequence is Spermatogenesis-associated protein 9 (252 aa).

A helical transmembrane segment spans residues 145 to 167 (TSIMYASYAALIYLAVCVNAVLA). Residues 208 to 221 (KAKPYRSLPEKPDN) show a composition bias toward basic and acidic residues. The segment at 208 to 235 (KAKPYRSLPEKPDNLLDQPKPPANKQSN) is disordered.

Its subcellular location is the membrane. May play at role in testicular development/spermatogenesis and may be an important factor in male infertility. This Mus musculus (Mouse) protein is Spermatogenesis-associated protein 9 (Spata9).